A 322-amino-acid chain; its full sequence is Uracil-DNA glycosylase (322 aa).

The active-site Proton acceptor is D142.

Belongs to the uracil-DNA glycosylase (UDG) superfamily. UNG family.

It localises to the mitochondrion. Its subcellular location is the nucleus. The enzyme catalyses Hydrolyzes single-stranded DNA or mismatched double-stranded DNA and polynucleotides, releasing free uracil.. Excises uracil residues from the DNA which can arise as a result of misincorporation of dUMP residues by DNA polymerase or due to deamination of cytosine. The protein is Uracil-DNA glycosylase (ung1) of Schizosaccharomyces pombe (strain 972 / ATCC 24843) (Fission yeast).